The following is a 424-amino-acid chain: Tyrosine--tRNA ligase (424 aa).

An L-tyrosine-binding site is contributed by tyrosine 33. A 'HIGH' region motif is present at residues 38–47 (PSADSLHIGH). Tyrosine 170 and glutamine 174 together coordinate L-tyrosine. A 'KMSKS' region motif is present at residues 230–234 (KFGKT). Lysine 233 is an ATP binding site. The S4 RNA-binding domain maps to 357–424 (MSLIDALVRC…RRHYHLIRLV (68 aa)).

This sequence belongs to the class-I aminoacyl-tRNA synthetase family. TyrS type 1 subfamily. Homodimer.

It localises to the cytoplasm. It carries out the reaction tRNA(Tyr) + L-tyrosine + ATP = L-tyrosyl-tRNA(Tyr) + AMP + diphosphate + H(+). Catalyzes the attachment of tyrosine to tRNA(Tyr) in a two-step reaction: tyrosine is first activated by ATP to form Tyr-AMP and then transferred to the acceptor end of tRNA(Tyr). The protein is Tyrosine--tRNA ligase of Roseiflexus castenholzii (strain DSM 13941 / HLO8).